Reading from the N-terminus, the 347-residue chain is 3',5'-bisphosphate nucleotidase 2 (347 aa).

D46 (proton acceptor) is an active-site residue. Mg(2+) is bound by residues E71, D134, I136, and D137. The active-site Proton acceptor is the T139. T139, S255, K258, R272, and D284 together coordinate adenosine 3',5'-bisphosphate. Positions 255, 258, 272, and 284 each coordinate AMP. D284 contributes to the Mg(2+) binding site.

Belongs to the inositol monophosphatase superfamily. Mg(2+) serves as cofactor. In terms of tissue distribution, very low expression in roots, leaves, stems, flowers and siliques.

The catalysed reaction is adenosine 3',5'-bisphosphate + H2O = AMP + phosphate. It carries out the reaction 3'-phosphoadenylyl sulfate + H2O = adenosine 5'-phosphosulfate + phosphate. It catalyses the reaction 1D-myo-inositol 1,4-bisphosphate + H2O = 1D-myo-inositol 4-phosphate + phosphate. It participates in signal transduction; phosphatidylinositol signaling pathway. With respect to regulation, inhibited by Li(+) (IC(50)=10 mM), Na(+) (IC(50)=200 mM) and Ca(2+) (IC(50)=0.03 mM). Its function is as follows. Phosphatase that converts adenosine 3'-phosphate 5'-phosphosulfate (PAPS) to adenosine 5'-phosphosulfate (APS) and 3'-phosphoadenosine 5'-phosphate (3'-PAP) to AMP. May regulate the flux of sulfur in the sulfur-activation pathway by converting PAPS to APS. Prevents both the toxicity of PAP on RNA processing enzymes as well as the product inhibition by PAP of sulfate conjugation. Is also able to hydrolyze inositol 1,4-bisphosphate. This Arabidopsis thaliana (Mouse-ear cress) protein is 3',5'-bisphosphate nucleotidase 2.